Here is a 324-residue protein sequence, read N- to C-terminus: Beta-ketoacyl-[acyl-carrier-protein] synthase III (324 aa).

Residues cysteine 112 and histidine 249 contribute to the active site. The ACP-binding stretch occupies residues glutamine 250–arginine 254. Asparagine 279 is a catalytic residue.

The protein belongs to the thiolase-like superfamily. FabH family. In terms of assembly, homodimer.

The protein resides in the cytoplasm. It carries out the reaction malonyl-[ACP] + acetyl-CoA + H(+) = 3-oxobutanoyl-[ACP] + CO2 + CoA. It functions in the pathway lipid metabolism; fatty acid biosynthesis. Its function is as follows. Catalyzes the condensation reaction of fatty acid synthesis by the addition to an acyl acceptor of two carbons from malonyl-ACP. Catalyzes the first condensation reaction which initiates fatty acid synthesis and may therefore play a role in governing the total rate of fatty acid production. Possesses both acetoacetyl-ACP synthase and acetyl transacylase activities. Its substrate specificity determines the biosynthesis of branched-chain and/or straight-chain of fatty acids. This is Beta-ketoacyl-[acyl-carrier-protein] synthase III from Streptococcus pyogenes serotype M2 (strain MGAS10270).